Here is a 432-residue protein sequence, read N- to C-terminus: 3-phosphoshikimate 1-carboxyvinyltransferase (432 aa).

The 3-phosphoshikimate site is built by lysine 25, serine 26, and arginine 30. Residue lysine 25 participates in phosphoenolpyruvate binding. Positions 97 and 125 each coordinate phosphoenolpyruvate. Residues serine 170, glutamine 172, aspartate 318, and lysine 345 each coordinate 3-phosphoshikimate. Residue glutamine 172 coordinates phosphoenolpyruvate. The active-site Proton acceptor is the aspartate 318. Arginine 349 and arginine 393 together coordinate phosphoenolpyruvate.

The protein belongs to the EPSP synthase family. As to quaternary structure, monomer.

It localises to the cytoplasm. The catalysed reaction is 3-phosphoshikimate + phosphoenolpyruvate = 5-O-(1-carboxyvinyl)-3-phosphoshikimate + phosphate. It functions in the pathway metabolic intermediate biosynthesis; chorismate biosynthesis; chorismate from D-erythrose 4-phosphate and phosphoenolpyruvate: step 6/7. Its function is as follows. Catalyzes the transfer of the enolpyruvyl moiety of phosphoenolpyruvate (PEP) to the 5-hydroxyl of shikimate-3-phosphate (S3P) to produce enolpyruvyl shikimate-3-phosphate and inorganic phosphate. The chain is 3-phosphoshikimate 1-carboxyvinyltransferase from Geobacillus thermodenitrificans (strain NG80-2).